The sequence spans 331 residues: Tetraacyldisaccharide 4'-kinase (331 aa).

60 to 67 (TVGGTGKT) lines the ATP pocket.

The protein belongs to the LpxK family.

It carries out the reaction a lipid A disaccharide + ATP = a lipid IVA + ADP + H(+). It participates in glycolipid biosynthesis; lipid IV(A) biosynthesis; lipid IV(A) from (3R)-3-hydroxytetradecanoyl-[acyl-carrier-protein] and UDP-N-acetyl-alpha-D-glucosamine: step 6/6. In terms of biological role, transfers the gamma-phosphate of ATP to the 4'-position of a tetraacyldisaccharide 1-phosphate intermediate (termed DS-1-P) to form tetraacyldisaccharide 1,4'-bis-phosphate (lipid IVA). The chain is Tetraacyldisaccharide 4'-kinase from Pseudomonas syringae pv. syringae (strain B728a).